The following is a 90-amino-acid chain: DNA-binding protein HU (90 aa).

The protein belongs to the bacterial histone-like protein family. In terms of assembly, homodimer.

Functionally, histone-like DNA-binding protein which is capable of wrapping DNA to stabilize it, and thus to prevent its denaturation under extreme environmental conditions. This Haemophilus influenzae (strain ATCC 51907 / DSM 11121 / KW20 / Rd) protein is DNA-binding protein HU (hup).